A 73-amino-acid polypeptide reads, in one-letter code: RNA-binding protein Hfq (73 aa).

The region spanning 8-68 is the Sm domain; sequence DQFLNQIRKD…ISTFAPQKNV (61 aa).

This sequence belongs to the Hfq family. In terms of assembly, homohexamer.

Functionally, RNA chaperone that binds small regulatory RNA (sRNAs) and mRNAs to facilitate mRNA translational regulation in response to envelope stress, environmental stress and changes in metabolite concentrations. Also binds with high specificity to tRNAs. The chain is RNA-binding protein Hfq from Bacillus pumilus (strain SAFR-032).